Reading from the N-terminus, the 517-residue chain is Crotonobetaine/carnitine--CoA ligase (517 aa).

This sequence belongs to the ATP-dependent AMP-binding enzyme family.

It catalyses the reaction 4-(trimethylamino)butanoate + ATP + CoA = 4-(trimethylamino)butanoyl-CoA + AMP + diphosphate. It carries out the reaction crotonobetaine + ATP + CoA = crotonobetainyl-CoA + AMP + diphosphate. The catalysed reaction is (R)-carnitine + ATP + CoA = (R)-carnitinyl-CoA + AMP + diphosphate. Its pathway is amine and polyamine metabolism; carnitine metabolism. Its function is as follows. Catalyzes the transfer of CoA to carnitine, generating the initial carnitinyl-CoA needed for the CaiB reaction cycle. Also has activity toward crotonobetaine and gamma-butyrobetaine. The chain is Crotonobetaine/carnitine--CoA ligase from Salmonella enteritidis PT4 (strain P125109).